The chain runs to 943 residues: Isoleucine--tRNA ligase (943 aa).

The short motif at 58–68 is the 'HIGH' region element; that stretch reads PYANGKIHIGH. Residue glutamate 567 participates in L-isoleucyl-5'-AMP binding. Residues 608 to 612 carry the 'KMSKS' region motif; that stretch reads KMSKS. Position 611 (lysine 611) interacts with ATP. Residues cysteine 906, cysteine 909, cysteine 926, and cysteine 929 each contribute to the Zn(2+) site.

Belongs to the class-I aminoacyl-tRNA synthetase family. IleS type 1 subfamily. As to quaternary structure, monomer. The cofactor is Zn(2+).

Its subcellular location is the cytoplasm. It catalyses the reaction tRNA(Ile) + L-isoleucine + ATP = L-isoleucyl-tRNA(Ile) + AMP + diphosphate. Functionally, catalyzes the attachment of isoleucine to tRNA(Ile). As IleRS can inadvertently accommodate and process structurally similar amino acids such as valine, to avoid such errors it has two additional distinct tRNA(Ile)-dependent editing activities. One activity is designated as 'pretransfer' editing and involves the hydrolysis of activated Val-AMP. The other activity is designated 'posttransfer' editing and involves deacylation of mischarged Val-tRNA(Ile). The protein is Isoleucine--tRNA ligase of Pseudomonas putida (strain W619).